Reading from the N-terminus, the 349-residue chain is Holliday junction branch migration complex subunit RuvB (349 aa).

Positions 1 to 183 (MTDPSRLVTP…FGIPIRLNFY (183 aa)) are large ATPase domain (RuvB-L). Residues leucine 22, arginine 23, glycine 64, lysine 67, threonine 68, threonine 69, 130 to 132 (EDF), arginine 173, tyrosine 183, and arginine 220 each bind ATP. Position 68 (threonine 68) interacts with Mg(2+). Residues 184 to 254 (TIEELESIVT…IADHALGALE (71 aa)) form a small ATPAse domain (RuvB-S) region. Residues 257 to 349 (SAGLDAMDRR…GLFGDTGDQE (93 aa)) are head domain (RuvB-H). The DNA site is built by arginine 293, arginine 312, and arginine 317.

It belongs to the RuvB family. Homohexamer. Forms an RuvA(8)-RuvB(12)-Holliday junction (HJ) complex. HJ DNA is sandwiched between 2 RuvA tetramers; dsDNA enters through RuvA and exits via RuvB. An RuvB hexamer assembles on each DNA strand where it exits the tetramer. Each RuvB hexamer is contacted by two RuvA subunits (via domain III) on 2 adjacent RuvB subunits; this complex drives branch migration. In the full resolvosome a probable DNA-RuvA(4)-RuvB(12)-RuvC(2) complex forms which resolves the HJ.

The protein resides in the cytoplasm. It catalyses the reaction ATP + H2O = ADP + phosphate + H(+). In terms of biological role, the RuvA-RuvB-RuvC complex processes Holliday junction (HJ) DNA during genetic recombination and DNA repair, while the RuvA-RuvB complex plays an important role in the rescue of blocked DNA replication forks via replication fork reversal (RFR). RuvA specifically binds to HJ cruciform DNA, conferring on it an open structure. The RuvB hexamer acts as an ATP-dependent pump, pulling dsDNA into and through the RuvAB complex. RuvB forms 2 homohexamers on either side of HJ DNA bound by 1 or 2 RuvA tetramers; 4 subunits per hexamer contact DNA at a time. Coordinated motions by a converter formed by DNA-disengaged RuvB subunits stimulates ATP hydrolysis and nucleotide exchange. Immobilization of the converter enables RuvB to convert the ATP-contained energy into a lever motion, pulling 2 nucleotides of DNA out of the RuvA tetramer per ATP hydrolyzed, thus driving DNA branch migration. The RuvB motors rotate together with the DNA substrate, which together with the progressing nucleotide cycle form the mechanistic basis for DNA recombination by continuous HJ branch migration. Branch migration allows RuvC to scan DNA until it finds its consensus sequence, where it cleaves and resolves cruciform DNA. The protein is Holliday junction branch migration complex subunit RuvB of Rhodopseudomonas palustris (strain ATCC BAA-98 / CGA009).